Consider the following 448-residue polypeptide: Fibulin-5 (448 aa).

An N-terminal signal peptide occupies residues 1–23; it reads MPGLKRILTVTILALWLPHPGNA. In terms of domain architecture, EGF-like 1; calcium-binding spans 42–82; that stretch reads DIDECRTIPEACRGDMMCVNQNGGYLCIPRTNPVYRGPYSN. 17 disulfide bridges follow: cysteine 46–cysteine 59, cysteine 53–cysteine 68, cysteine 131–cysteine 144, cysteine 138–cysteine 153, cysteine 155–cysteine 166, cysteine 172–cysteine 181, cysteine 177–cysteine 190, cysteine 192–cysteine 205, cysteine 211–cysteine 221, cysteine 217–cysteine 230, cysteine 232–cysteine 245, cysteine 251–cysteine 262, cysteine 258–cysteine 271, cysteine 273–cysteine 286, cysteine 292–cysteine 305, cysteine 299–cysteine 314, and cysteine 320–cysteine 332. The short motif at 54-56 is the Cell attachment site element; the sequence is RGD. Residues 127-167 form the EGF-like 2; calcium-binding domain; the sequence is DVDECATDSHQCNPTQICINTEGGYTCSCTDGYWLLEGQCL. Positions 168-206 constitute an EGF-like 3; calcium-binding domain; it reads DIDECRYGYCQQLCANVPGSYSCTCNPGFTLNDDGRSCQ. In terms of domain architecture, EGF-like 4; calcium-binding spans 207 to 246; it reads DVNECETENPCVQTCVNTYGSFICRCDPGYELEEDGIHCS. An interaction with LOXL1 region spans residues 245-448; that stretch reads CSDMDECSFS…LRIYVSQYPF (204 aa). Residues 247–287 form the EGF-like 5; calcium-binding domain; it reads DMDECSFSEFLCQHECVNQPGSYFCSCPPGYVLLDDNRSCQ. N-linked (GlcNAc...) asparagine glycans are attached at residues asparagine 283 and asparagine 296. The 46-residue stretch at 288–333 folds into the EGF-like 6; calcium-binding domain; the sequence is DINECEHRNHTCTSLQTCYNLQGGFKCIDPISCEEPYLLIGENRCM.

The protein belongs to the fibulin family. As to quaternary structure, homodimer. Monomer, homodimerizes in presence of Ca(2+). Interacts with ELN. Interacts (via N-terminus) with the integrins ITGAV/ITGB3, ITGAV/ITGB5 and ITGA9/ITGB1. Interacts with FBN1 (via N-terminal domain). Forms a ternary complex with ELN and FBN1. Interacts with EFEMP2 with moderate affinity. Interacts with LOXL1. In terms of processing, N-glycosylated.

The protein resides in the secreted. The protein localises to the extracellular space. It is found in the extracellular matrix. Functionally, essential for elastic fiber formation, is involved in the assembly of continuous elastin (ELN) polymer and promotes the interaction of microfibrils and ELN. Stabilizes and organizes elastic fibers in the skin, lung and vasculature. Promotes adhesion of endothelial cells through interaction of integrins and the RGD motif. Vascular ligand for integrin receptors which may play a role in vascular development and remodeling. May act as an adapter that mediates the interaction between FBN1 and ELN. This chain is Fibulin-5 (Fbln5), found in Mus musculus (Mouse).